The chain runs to 79 residues: MRVLFIIAGLALLSVVCYTSEMKERSSFNEVLSEFFAADEPQERDCLGQWASCEPKNSKCCPNYACTWKYPWCRYRAGK.

Residues 1–19 form the signal peptide; it reads MRVLFIIAGLALLSVVCYT. Residues 20-44 constitute a propeptide that is removed on maturation; that stretch reads SEMKERSSFNEVLSEFFAADEPQER. Cystine bridges form between Cys46–Cys61, Cys53–Cys66, and Cys60–Cys73. The residue at position 77 (Ala77) is an Alanine amide.

This sequence belongs to the neurotoxin 03 (Tx2) family. 01 subfamily. Expressed by the venom gland.

The protein resides in the secreted. Functionally, probable ion channel inhibitor. Shows insecticidal activity when injected into mealworms. The protein is Orally active insecticidal peptide of Selenotypus plumipes (Australian featherleg tarantula).